We begin with the raw amino-acid sequence, 348 residues long: MKVGVVGASGYVGGETLRLLVNHPNVEITMVTSRQHVGEYLHRVQPSLKGFTDLTFSELDYDKLTDKCDLVFTAVPHGTATEIVKALYDRGIKIIDLSADYRLHDQDAYDKWYGWEHPHPDYLNKSVFGVPELHREEIKKAQLVSCPGCMAVTSMLALAPLIRNNIIDTDHIVVDSKIGSSGAGSGSGTAHAMRAGVIRPYKPAKHRHTGEIEQELSEIAGKKIHVSMSPHAVDVVRGILCTNHTFMQKDMEEKELWKLYRQTYGEEKFVRLIRDKKGLYKFPDPKFLVGSNFCDIGFDLDEDNNRLIALSASDNLMKGAAGSAIQNMNVMCGFDEMDGLRYTPLTPV.

Residue serine 9–valine 12 participates in NADP(+) binding. The active site involves cysteine 149. Asparagine 315 is a binding site for NADP(+).

Belongs to the NAGSA dehydrogenase family. Type 1 subfamily. LysY sub-subfamily.

The protein localises to the cytoplasm. It carries out the reaction [amino-group carrier protein]-C-terminal-N-(1-carboxy-5-oxopentan-1-yl)-L-glutamine + phosphate + NADP(+) = [amino-group carrier protein]-C-terminal-N-(1-carboxy-5-phosphooxy-5-oxopentan-1-yl)-L-glutamine + NADPH + H(+). The catalysed reaction is [amino-group carrier protein]-C-terminal-gamma-(L-glutamyl-5-semialdehyde)-L-glutamate + phosphate + NADP(+) = [amino-group carrier protein]-C-terminal-gamma-(5-phospho-L-glutamyl)-L-glutamate + NADPH + H(+). Its pathway is amino-acid biosynthesis; L-lysine biosynthesis via AAA pathway; L-lysine from L-alpha-aminoadipate (Thermus route): step 3/5. It functions in the pathway amino-acid biosynthesis; L-arginine biosynthesis. In terms of biological role, involved in both the arginine and lysine biosynthetic pathways. The protein is Putative [LysW]-L-2-aminoadipate/[LysW]-L-glutamate phosphate reductase of Nitrosopumilus maritimus (strain SCM1).